A 91-amino-acid polypeptide reads, in one-letter code: Probable Fe(2+)-trafficking protein (91 aa).

The protein belongs to the Fe(2+)-trafficking protein family.

Functionally, could be a mediator in iron transactions between iron acquisition and iron-requiring processes, such as synthesis and/or repair of Fe-S clusters in biosynthetic enzymes. The sequence is that of Probable Fe(2+)-trafficking protein from Xanthomonas axonopodis pv. citri (strain 306).